The following is a 538-amino-acid chain: Syncytin-1 (538 aa).

The first 20 residues, 1 to 20 (MALPYHIFLFTVLLPSFTLT), serve as a signal peptide directing secretion. Over 21 to 443 (APPPCRCMTS…NTGPWGLLSQ (423 aa)) the chain is Extracellular. Residue Asn169 is glycosylated (N-linked (GlcNAc...) asparagine). The CXXC motif lies at 186 to 189 (CWIC). Cystine bridges form between Cys186–Cys189, Cys186–Cys405, and Cys397–Cys404. Residues Asn208, Asn214, Asn234, Asn242, and Asn281 are each glycosylated (N-linked (GlcNAc...) asparagine). The segment at 320–340 (ILPFVIGAGVLGALGTGIGGI) is fusion peptide. The tract at residues 380 to 396 (LQNRRALDLLTAERGGT) is immunosuppression. The short motif at 397 to 405 (CLFLGEECC) is the CX6CC element. N-linked (GlcNAc...) asparagine glycosylation occurs at Asn409. Residues 444 to 464 (WMPWILPFLGPLAAIILLLLF) traverse the membrane as a helical segment. The segment at 465-484 (GPCIFNLLVNFVSSRIEAVK) is essential for the fusiogenic function. At 465-538 (GPCIFNLLVN…LLRPNSAGSS (74 aa)) the chain is on the cytoplasmic side. Residues 496 to 538 (KIYRRPLDRPASPRSDVNDIKGTPPEEILTAQPLLRPNSAGSS) are disordered.

This sequence belongs to the gamma type-C retroviral envelope protein family. HERV class-I W env subfamily. The mature envelope protein (Env) consists of a trimer of SU-TM heterodimers attached probably by a labile interchain disulfide bond. Interacts with the C-type lectin CD209/DC-SIGN. Post-translationally, specific enzymatic cleavages in vivo yield mature proteins. Envelope glycoproteins are synthesized as an inactive precursor that is heavily N-glycosylated and processed likely by furin in the Golgi to yield the mature SU and TM proteins. The cleavage site between SU and TM requires the minimal sequence [KR]-X-[KR]-R. In terms of processing, the CXXC motif is highly conserved across a broad range of retroviral envelope proteins. It is thought to participate in the formation of a labile disulfide bond possibly with the CX6CC motif present in the transmembrane protein.

Its subcellular location is the cell membrane. The protein localises to the virion. In terms of biological role, this endogenous retroviral envelope protein has retained its original fusogenic properties and participates in trophoblast fusion and the formation of a syncytium during placenta morphogenesis. May recognize and induce fusion through binding of SLC1A4 and SLC1A5. Endogenous envelope proteins may have kept, lost or modified their original function during evolution. Retroviral envelope proteins mediate receptor recognition and membrane fusion during early infection. The surface protein (SU) mediates receptor recognition, while the transmembrane protein (TM) acts as a class I viral fusion protein. The protein may have at least 3 conformational states: pre-fusion native state, pre-hairpin intermediate state, and post-fusion hairpin state. During viral and target cell membrane fusion, the coiled coil regions (heptad repeats) assume a trimer-of-hairpins structure, positioning the fusion peptide in close proximity to the C-terminal region of the ectodomain. The formation of this structure appears to drive apposition and subsequent fusion of membranes. This chain is Syncytin-1 (ERVW-1), found in Pan troglodytes (Chimpanzee).